We begin with the raw amino-acid sequence, 604 residues long: MTTRKDKPLNIYHTLVSIIIPVYNGANYMKEAINSALAQTYKNIEIIVVNDGSKDNGETERVALSYGDKIRYFYKENGGCGSALNYGIKNMQGEYFSWLSHDDIYYPNKIEHQVDILNKLDNKDTIIYGGYELIDEKGNSLRYIKPDSVLPINKLNISLLPLLRGLIHGCSLLMPAKYFHEVGIFNEALPTTQDYDLWFKIFRVAPIHFDESILIKSRFHSEQGSKKISNHNEECNVLWSSFLHELTEEEMIKMEGSPYLFLTRTATFLSNNTPYKKACDLANTMAKQVLNDTKISVIIPVYNRINWAIEAIKSVLIQTHKNFEILIIDDGSTDDISELTAICKKDKRIKYFHKKNEGPAAARNLGIKNAIGKYIAFLDSDDLFYKDKIEIQLKFMEENNFIFSHTSYHKINEKGKYIESVHSGLFSGNVFPQVIQTCPIAMPTVMGTLTLFQENLFPENIRSGEDCCLWISIASKNSIGGIDKELSKVRISGGTNTFMDPNKYSVGLINITSYVLNDAYLSKFSPFTINLLLAAVTQLRLLENKNEDYKKSNISFFKNNYVIQKIRTYCFVTKILILLTITSIRQEGIRATISRIQRWLKKHI.

This sequence belongs to the glycosyltransferase 2 family.

This is an uncharacterized protein from Rickettsia conorii (strain ATCC VR-613 / Malish 7).